The following is a 703-amino-acid chain: Cyclomaltodextrin glucanotransferase (703 aa).

The N-terminal stretch at M1 to A29 is a signal peptide. Residues D30–P160 form an A1 region. Ca(2+)-binding residues include D52, N54, N57, and N58. A disulfide bridge connects residues C68 and C75. Residues G76 and D78 each coordinate Ca(2+). Y122–W123 is a substrate binding site. N161 lines the Ca(2+) pocket. Residues N161 to L224 are b. H162 is a binding site for substrate. I212 contacts Ca(2+). N215 to D218 is a binding site for substrate. D221 provides a ligand contact to Ca(2+). The tract at residues N225–Y428 is A2. R249 lines the substrate pocket. D251 serves as the catalytic Nucleophile. K254–H255 contributes to the substrate binding site. Ca(2+) is bound at residue H255. E279 functions as the Proton donor in the catalytic mechanism. Substrate contacts are provided by H349, D393, and R397. A c region spans residues G429 to P516. Residues S517–L600 form a d region. Residues P520–E598 enclose the IPT/TIG domain. Positions V599 to W703 constitute a CBM20 domain. The tract at residues S601–W703 is e.

This sequence belongs to the glycosyl hydrolase 13 family. Monomer. It depends on Ca(2+) as a cofactor.

Its subcellular location is the secreted. It catalyses the reaction Cyclizes part of a (1-&gt;4)-alpha-D-glucan chain by formation of a (1-&gt;4)-alpha-D-glucosidic bond.. The protein is Cyclomaltodextrin glucanotransferase (cgt) of Bacillus sp. (strain 1-1).